The primary structure comprises 134 residues: Large ribosomal subunit protein bL17 (134 aa).

Belongs to the bacterial ribosomal protein bL17 family. As to quaternary structure, part of the 50S ribosomal subunit. Contacts protein L32.

The polypeptide is Large ribosomal subunit protein bL17 (Aromatoleum aromaticum (strain DSM 19018 / LMG 30748 / EbN1) (Azoarcus sp. (strain EbN1))).